The sequence spans 185 residues: Bcl-2-modifying factor (185 aa).

Residues 1–28 (MEPPQCVEELEDDVFQPEDGEPGTQPGS) form a disordered region. Over residues 8-21 (EELEDDVFQPEDGE) the composition is skewed to acidic residues. Residues 67–75 (DKATQTLSP) form an interaction with DLC2 region. Residues 134 to 148 (IARKLQCIADQFHRL) carry the BH3 motif.

It belongs to the Bcl-2 family. In terms of assembly, interacts with MCL1, BCL2, BCL2L1/BCL-Xl, BCL2A1 and BCL2L2/BCL-w. Interacts with the myosin V actin motor complex through its binding to DLC2.

Functionally, may play a role in apoptosis. This chain is Bcl-2-modifying factor (Bmf), found in Rattus norvegicus (Rat).